We begin with the raw amino-acid sequence, 285 residues long: Glutamate racemase (285 aa).

Residues Asp28 to Ser29 and Tyr60 to Gly61 each bind substrate. Cys92 (proton donor/acceptor) is an active-site residue. Asn93–Thr94 contacts substrate. UDP-N-acetyl-alpha-D-muramoyl-L-alanine-binding positions include Arg104 and Gly113 to Lys119. The Proton donor/acceptor role is filled by Cys204. Thr205–His206 contributes to the substrate binding site.

The protein belongs to the aspartate/glutamate racemases family. In terms of assembly, monomer.

The enzyme catalyses L-glutamate = D-glutamate. The protein operates within cell wall biogenesis; peptidoglycan biosynthesis. With respect to regulation, the low basal catalytic activity in increased 1000-fold in the presence of UDP-MurNAc-L-Ala, the product of the preceding enzyme in the peptidoglycan biosynthesis. Its function is as follows. Provides the (R)-glutamate required for cell wall biosynthesis. The sequence is that of Glutamate racemase from Escherichia coli (strain K12).